Reading from the N-terminus, the 224-residue chain is 7-cyano-7-deazaguanine synthase (224 aa).

9-19 contacts ATP; sequence LSGGLDSATVL. Zn(2+) is bound by residues cysteine 189, cysteine 199, cysteine 202, and cysteine 205.

Belongs to the QueC family. The cofactor is Zn(2+).

It carries out the reaction 7-carboxy-7-deazaguanine + NH4(+) + ATP = 7-cyano-7-deazaguanine + ADP + phosphate + H2O + H(+). It functions in the pathway purine metabolism; 7-cyano-7-deazaguanine biosynthesis. In terms of biological role, catalyzes the ATP-dependent conversion of 7-carboxy-7-deazaguanine (CDG) to 7-cyano-7-deazaguanine (preQ(0)). The sequence is that of 7-cyano-7-deazaguanine synthase from Ralstonia nicotianae (strain ATCC BAA-1114 / GMI1000) (Ralstonia solanacearum).